The sequence spans 257 residues: MKYQVKQVAEISGVSIRTLHHYDNIELLNPSALTDAGYRLYSDADLERLQQILFFKEIGFRLDEIKEMLDHPNFDRKAALQSQKEILMKKKQRMDEMIQTIDRTLLSVDGGETMNKRDLFAGLSMKDIEEHQQTYADEVRKLYGKEIAEETEKRTSAYSADDWRTIMAEFDSIYRRIAARMKHGPDDAEIQAAVGAFRDHICQYHYDCTLDIFRGLGEVYITDERFTDSINQYGEGLAAFLREAIIIYCDHQENPRP.

An HTH merR-type domain is found at 2-71; the sequence is KYQVKQVAEI…LDEIKEMLDH (70 aa). Residues 5–24 constitute a DNA-binding region (H-T-H motif); it reads VKQVAEISGVSIRTLHHYDN. Residues 71 to 74 form a hinge region; sequence HPNF. The essential for dimerization stretch occupies residues 76 to 104; sequence RKAALQSQKEILMKKKQRMDEMIQTIDRT. Residues 76 to 107 are a coiled coil; the sequence is RKAALQSQKEILMKKKQRMDEMIQTIDRTLLS.

As to quaternary structure, homodimer.

The protein localises to the cytoplasm. Its function is as follows. Global transcriptional regulator that activates transcription of bmr and blt by binding directly to their promoter. Also stimulates the expression of the mta gene itself, ydfK and ymfE. The polypeptide is HTH-type transcriptional activator mta (mta) (Bacillus subtilis (strain 168)).